A 259-amino-acid chain; its full sequence is MMQKQNMIVVNQKEIAKNIYELVLQGTLVQQMNEPGQFVHIKVAEGIAPLLRRPISICNVDQEKNEFTMLYRAEGQGTKTLATRKQGEMVDVLGPLGHGFPVEEAEAGQTALLVGGGIGVPPLYELSQRLVAKGVRVIHILGFQTKDVVFYEEKFAELGDTYVATVDGTHGTKGFVTDVIDNYGIDFDILYSCGPLAMLRALEGRYKEKKAYISLEERMGCGIGACFACVCHLQEDPSGHSYKKVCSDGPVFPIGEVVL.

One can recognise an FAD-binding FR-type domain in the interval 2 to 102 (MQKQNMIVVN…LGPLGHGFPV (101 aa)). FAD is bound by residues 53–56 (RPIS), 70–72 (LYR), and 77–78 (GT). [2Fe-2S] cluster is bound by residues cysteine 221, cysteine 226, cysteine 229, and cysteine 246.

It belongs to the PyrK family. In terms of assembly, heterotetramer of 2 PyrK and 2 PyrD type B subunits. It depends on [2Fe-2S] cluster as a cofactor. Requires FAD as cofactor.

It functions in the pathway pyrimidine metabolism; UMP biosynthesis via de novo pathway; orotate from (S)-dihydroorotate (NAD(+) route): step 1/1. Its function is as follows. Responsible for channeling the electrons from the oxidation of dihydroorotate from the FMN redox center in the PyrD type B subunit to the ultimate electron acceptor NAD(+). In Bacillus cereus (strain ATCC 14579 / DSM 31 / CCUG 7414 / JCM 2152 / NBRC 15305 / NCIMB 9373 / NCTC 2599 / NRRL B-3711), this protein is Dihydroorotate dehydrogenase B (NAD(+)), electron transfer subunit.